We begin with the raw amino-acid sequence, 419 residues long: L-rhamnose isomerase (419 aa).

Residues histidine 262, aspartate 294, and aspartate 296 each coordinate Mn(2+).

This sequence belongs to the rhamnose isomerase family. Homotetramer. Requires Mn(2+) as cofactor.

The protein localises to the cytoplasm. It carries out the reaction L-rhamnopyranose = L-rhamnulose. It participates in carbohydrate degradation; L-rhamnose degradation; glycerone phosphate from L-rhamnose: step 1/3. Its function is as follows. Catalyzes the interconversion of L-rhamnose and L-rhamnulose. The protein is L-rhamnose isomerase of Escherichia coli O127:H6 (strain E2348/69 / EPEC).